Reading from the N-terminus, the 468-residue chain is ATP synthase subunit beta (468 aa).

155-162 contributes to the ATP binding site; that stretch reads GGAGVGKT.

It belongs to the ATPase alpha/beta chains family. F-type ATPases have 2 components, CF(1) - the catalytic core - and CF(0) - the membrane proton channel. CF(1) has five subunits: alpha(3), beta(3), gamma(1), delta(1), epsilon(1). CF(0) has three main subunits: a(1), b(2) and c(9-12). The alpha and beta chains form an alternating ring which encloses part of the gamma chain. CF(1) is attached to CF(0) by a central stalk formed by the gamma and epsilon chains, while a peripheral stalk is formed by the delta and b chains.

It is found in the cell membrane. It catalyses the reaction ATP + H2O + 4 H(+)(in) = ADP + phosphate + 5 H(+)(out). In terms of biological role, produces ATP from ADP in the presence of a proton gradient across the membrane. The catalytic sites are hosted primarily by the beta subunits. This is ATP synthase subunit beta from Streptococcus pneumoniae (strain Taiwan19F-14).